The primary structure comprises 672 residues: DNA ligase (672 aa).

NAD(+) is bound by residues 34–38, 83–84, and Glu113; these read DSVYD and SL. Residue Lys115 is the N6-AMP-lysine intermediate of the active site. Residues Arg136, Glu170, Lys286, and Lys310 each coordinate NAD(+). The Zn(2+) site is built by Cys404, Cys407, Cys422, and Cys427. Residues 592 to 672 form the BRCT domain; it reads STDSSFNGLR…EFIQQMEEES (81 aa).

This sequence belongs to the NAD-dependent DNA ligase family. LigA subfamily. The cofactor is Mg(2+). Mn(2+) is required as a cofactor.

It catalyses the reaction NAD(+) + (deoxyribonucleotide)n-3'-hydroxyl + 5'-phospho-(deoxyribonucleotide)m = (deoxyribonucleotide)n+m + AMP + beta-nicotinamide D-nucleotide.. Functionally, DNA ligase that catalyzes the formation of phosphodiester linkages between 5'-phosphoryl and 3'-hydroxyl groups in double-stranded DNA using NAD as a coenzyme and as the energy source for the reaction. It is essential for DNA replication and repair of damaged DNA. The sequence is that of DNA ligase from Ligilactobacillus salivarius (strain UCC118) (Lactobacillus salivarius).